The sequence spans 243 residues: Lipid II isoglutaminyl synthase (glutamine-hydrolyzing) subunit GatD (243 aa).

The region spanning 6 to 197 is the GATase cobBQ-type domain; sequence IYHFMSDKLN…LHGPILPKNY (192 aa). The Nucleophile role is filled by cysteine 94. Substrate is bound at residue arginine 128. Residue histidine 189 is part of the active site.

It belongs to the CobB/CobQ family. GatD subfamily. Forms a heterodimer with MurT.

It carries out the reaction beta-D-GlcNAc-(1-&gt;4)-Mur2Ac(oyl-L-Ala-gamma-D-Glu-L-Lys-D-Ala-D-Ala)-di-trans,octa-cis-undecaprenyl diphosphate + L-glutamine + ATP + H2O = beta-D-GlcNAc-(1-&gt;4)-Mur2Ac(oyl-L-Ala-D-isoglutaminyl-L-Lys-D-Ala-D-Ala)-di-trans,octa-cis-undecaprenyl diphosphate + L-glutamate + ADP + phosphate + H(+). The enzyme catalyses L-glutamine + H2O = L-glutamate + NH4(+). Its pathway is cell wall biogenesis; peptidoglycan biosynthesis. In terms of biological role, the lipid II isoglutaminyl synthase complex catalyzes the formation of alpha-D-isoglutamine in the cell wall lipid II stem peptide. The GatD subunit catalyzes the hydrolysis of glutamine to glutamate and ammonia. The resulting ammonia molecule is channeled to the active site of MurT. The polypeptide is Lipid II isoglutaminyl synthase (glutamine-hydrolyzing) subunit GatD (Staphylococcus aureus (strain N315)).